The sequence spans 323 residues: Ribosomal RNA small subunit methyltransferase H (323 aa).

S-adenosyl-L-methionine-binding positions include 44–46 (AGH), aspartate 64, tyrosine 91, aspartate 112, and glutamine 119.

The protein belongs to the methyltransferase superfamily. RsmH family.

It is found in the cytoplasm. It carries out the reaction cytidine(1402) in 16S rRNA + S-adenosyl-L-methionine = N(4)-methylcytidine(1402) in 16S rRNA + S-adenosyl-L-homocysteine + H(+). In terms of biological role, specifically methylates the N4 position of cytidine in position 1402 (C1402) of 16S rRNA. This Nitratidesulfovibrio vulgaris (strain ATCC 29579 / DSM 644 / CCUG 34227 / NCIMB 8303 / VKM B-1760 / Hildenborough) (Desulfovibrio vulgaris) protein is Ribosomal RNA small subunit methyltransferase H.